The chain runs to 359 residues: MEEMTVQSNQSSYPIYIGQGLRYQLSSYIEKKYTKLFIITDDQVGSRYLKDVLHGYPSEENICHFTIPSGESSKSIDNFYRLQTEALQNGLDRHSLIIALGGGVVGDLAGLVAATFMRGIDYIQVPTTILAHDSSVGGKVAINHHLGKNLIGSFFPPVAVIYDIETLSTLPPHEIRSGYAEIVKEGLIANQKMFLSLLDHSLASIKPHQLEIYLKAGIQVKSRIVEQDEKEANIRKFLNLGHTLGHALETIHGYGNITHGEAVANGLLFALHVSEYEFEIQLPFYQLYQWLKDNEYPILSFSEEEITQLIELMKTDKKSVGGTIQMVLLKEVEDPVTVSLDNSMMKQHLSTYLERMEKL.

NAD(+) contacts are provided by residues Ser69–Lys74, Gly103–Asp107, Thr127–Thr128, Lys139, Lys148, and Thr166–Thr169. Zn(2+) is bound by residues Glu181, His242, and His259.

It belongs to the sugar phosphate cyclases superfamily. Dehydroquinate synthase family. NAD(+) is required as a cofactor. The cofactor is Co(2+). It depends on Zn(2+) as a cofactor.

The protein resides in the cytoplasm. The enzyme catalyses 7-phospho-2-dehydro-3-deoxy-D-arabino-heptonate = 3-dehydroquinate + phosphate. Its pathway is metabolic intermediate biosynthesis; chorismate biosynthesis; chorismate from D-erythrose 4-phosphate and phosphoenolpyruvate: step 2/7. Catalyzes the conversion of 3-deoxy-D-arabino-heptulosonate 7-phosphate (DAHP) to dehydroquinate (DHQ). In Oceanobacillus iheyensis (strain DSM 14371 / CIP 107618 / JCM 11309 / KCTC 3954 / HTE831), this protein is 3-dehydroquinate synthase.